Consider the following 222-residue polypeptide: Voltage-dependent calcium channel gamma-1 subunit (222 aa).

Residues 1–10 are Cytoplasmic-facing; it reads MSPTEAPKVR. Residues 11–29 form a helical membrane-spanning segment; sequence VTLFCILVGIVLAMTAVVS. The Extracellular portion of the chain corresponds to 30-108; that stretch reads DHWAVLSPHM…TQKEYSISAA (79 aa). N-linked (GlcNAc...) asparagine glycans are attached at residues N43 and N79. Cysteines 57 and 80 form a disulfide. Residues 109–129 traverse the membrane as a helical segment; the sequence is AISVFSLGFLIMGTICALMAF. The Cytoplasmic portion of the chain corresponds to 130–134; the sequence is RKKRD. A helical transmembrane segment spans residues 135 to 155; that stretch reads YLLRPASMFYVFAGLCLFVSL. Topologically, residues 156 to 179 are extracellular; sequence EVMRQSVKRMIDSEDTVWIEYYYS. The chain crosses the membrane as a helical span at residues 180–204; it reads WSFACACAAFVLLFLGGISLLLFSL. Over 205–222 the chain is Cytoplasmic; the sequence is PRMPQNPWESCMDAEPEH.

It belongs to the PMP-22/EMP/MP20 family. CACNG subfamily. In terms of assembly, component of a calcium channel complex consisting of a pore-forming alpha subunit (CACNA1S) and the ancillary subunits CACNB1 or CACNB2, CACNG1 and CACNA2D1. The channel complex contains alpha, beta, gamma and delta subunits in a 1:1:1:1 ratio, i.e. it contains either CACNB1 or CACNB2. Post-translationally, N-glycosylated. Skeletal muscle (at protein level).

It localises to the cell membrane. The protein localises to the sarcolemma. Functionally, regulatory subunit of the voltage-gated calcium channel that gives rise to L-type calcium currents in skeletal muscle. Regulates channel inactivation kinetics. This chain is Voltage-dependent calcium channel gamma-1 subunit (CACNG1), found in Oryctolagus cuniculus (Rabbit).